Consider the following 196-residue polypeptide: Fe/S biogenesis protein NfuA (196 aa).

[4Fe-4S] cluster-binding residues include C154 and C157.

It belongs to the NfuA family. As to quaternary structure, homodimer. The cofactor is [4Fe-4S] cluster.

In terms of biological role, involved in iron-sulfur cluster biogenesis. Binds a 4Fe-4S cluster, can transfer this cluster to apoproteins, and thereby intervenes in the maturation of Fe/S proteins. Could also act as a scaffold/chaperone for damaged Fe/S proteins. The chain is Fe/S biogenesis protein NfuA from Blochmanniella pennsylvanica (strain BPEN).